The chain runs to 85 residues: Large ribosomal subunit protein bL27 (85 aa).

Belongs to the bacterial ribosomal protein bL27 family.

In Stutzerimonas stutzeri (strain A1501) (Pseudomonas stutzeri), this protein is Large ribosomal subunit protein bL27.